The sequence spans 618 residues: Acetolactate synthase (618 aa).

The segment at 1 to 30 (MSAPTKPHSPTFKPEPHSAANEPKHPAARP) is disordered. E85 contacts thiamine diphosphate. Residues R187, 293 to 314 (HGTVAAVAALQRSDLLIALGTR), and 336 to 355 (DIDPAEIGKNRHADVPIVGD) contribute to the FAD site. The segment at 429 to 509 (QHQMWAAQFI…VKVALINNGN (81 aa)) is thiamine pyrophosphate binding. Residues D480 and N507 each coordinate Mg(2+).

The protein belongs to the TPP enzyme family. It depends on Mg(2+) as a cofactor. Thiamine diphosphate serves as cofactor.

It carries out the reaction 2 pyruvate + H(+) = (2S)-2-acetolactate + CO2. It participates in amino-acid biosynthesis; L-isoleucine biosynthesis; L-isoleucine from 2-oxobutanoate: step 1/4. It functions in the pathway amino-acid biosynthesis; L-valine biosynthesis; L-valine from pyruvate: step 1/4. The sequence is that of Acetolactate synthase (ilvB) from Mycobacterium bovis (strain ATCC BAA-935 / AF2122/97).